Here is a 358-residue protein sequence, read N- to C-terminus: DNA polymerase IV (358 aa).

In terms of domain architecture, UmuC spans 4 to 185; it reads IIHVDMDCFY…LPLIKIPGVG (182 aa). Positions 8 and 103 each coordinate Mg(2+). Residue Glu104 is part of the active site.

It belongs to the DNA polymerase type-Y family. Monomer. Requires Mg(2+) as cofactor.

The protein resides in the cytoplasm. It carries out the reaction DNA(n) + a 2'-deoxyribonucleoside 5'-triphosphate = DNA(n+1) + diphosphate. Poorly processive, error-prone DNA polymerase involved in untargeted mutagenesis. Copies undamaged DNA at stalled replication forks, which arise in vivo from mismatched or misaligned primer ends. These misaligned primers can be extended by PolIV. Exhibits no 3'-5' exonuclease (proofreading) activity. May be involved in translesional synthesis, in conjunction with the beta clamp from PolIII. This is DNA polymerase IV from Shewanella halifaxensis (strain HAW-EB4).